Here is a 74-residue protein sequence, read N- to C-terminus: Putative protein YozX (74 aa).

The sequence is that of Putative protein YozX (yozX) from Bacillus subtilis (strain 168).